The primary structure comprises 157 residues: 2-C-methyl-D-erythritol 2,4-cyclodiphosphate synthase (157 aa).

A divalent metal cation is bound by residues D8 and H10. 4-CDP-2-C-methyl-D-erythritol 2-phosphate contacts are provided by residues 8–10 and 34–35; these read DVH and HS. H42 lines the a divalent metal cation pocket. 4-CDP-2-C-methyl-D-erythritol 2-phosphate contacts are provided by residues 56–58, 132–135, F139, and R142; these read DIG and TTNE.

It belongs to the IspF family. In terms of assembly, homotrimer. The cofactor is a divalent metal cation.

The enzyme catalyses 4-CDP-2-C-methyl-D-erythritol 2-phosphate = 2-C-methyl-D-erythritol 2,4-cyclic diphosphate + CMP. It functions in the pathway isoprenoid biosynthesis; isopentenyl diphosphate biosynthesis via DXP pathway; isopentenyl diphosphate from 1-deoxy-D-xylulose 5-phosphate: step 4/6. Its function is as follows. Involved in the biosynthesis of isopentenyl diphosphate (IPP) and dimethylallyl diphosphate (DMAPP), two major building blocks of isoprenoid compounds. Catalyzes the conversion of 4-diphosphocytidyl-2-C-methyl-D-erythritol 2-phosphate (CDP-ME2P) to 2-C-methyl-D-erythritol 2,4-cyclodiphosphate (ME-CPP) with a corresponding release of cytidine 5-monophosphate (CMP). The polypeptide is 2-C-methyl-D-erythritol 2,4-cyclodiphosphate synthase (Symbiobacterium thermophilum (strain DSM 24528 / JCM 14929 / IAM 14863 / T)).